Here is a 21-residue protein sequence, read N- to C-terminus: ATVVAPKYTAIKPLGDRVLVK.

Belongs to the GroES chaperonin family. Forms stable complexes with CPN60 in the presence of ATP.

The protein localises to the plastid. It localises to the chloroplast. Functionally, seems to function only as a co-chaperone, along with cpn60, and in certain cases is essential for the discharge of biologically active proteins from cpn60. In Pisum sativum (Garden pea), this protein is 20 kDa chaperonin, chloroplastic (CPN21).